Reading from the N-terminus, the 416-residue chain is N-acetyl-L-cysteine deacetylase (416 aa).

Positions 128, 130, 164, 188, and 380 each coordinate Zn(2+).

Belongs to the peptidase M20 family. Zn(2+) is required as a cofactor. It depends on Co(2+) as a cofactor.

It catalyses the reaction N-acetyl-L-cysteine + H2O = L-cysteine + acetate. Its pathway is amino-acid metabolism. Involved in a cysteine salvage pathway from S-alkylcysteine. Catalyzes the last step in this pathway, i.e. the deacetylation of N-acetyl-L-cysteine. This pathway is likely important in the catabolism of alkylated cysteine generated by proteolysis of alkylated glutathione formed in the detoxification of a wide range of electrophiles. This chain is N-acetyl-L-cysteine deacetylase, found in Bacillus subtilis (strain 168).